A 508-amino-acid chain; its full sequence is GMP synthase [glutamine-hydrolyzing] (508 aa).

The Glutamine amidotransferase type-1 domain occupies 1 to 189 (MILVLDFGSQ…ALLVCGCEKT (189 aa)). The active-site Nucleophile is the C78. Active-site residues include H163 and E165. Residues 190 to 383 (WGMQHFAQKE…LGISQDFLMR (194 aa)) form the GMPS ATP-PPase domain. Residue 217-223 (SGGVDST) coordinates ATP.

In terms of assembly, homodimer.

The enzyme catalyses XMP + L-glutamine + ATP + H2O = GMP + L-glutamate + AMP + diphosphate + 2 H(+). It functions in the pathway purine metabolism; GMP biosynthesis; GMP from XMP (L-Gln route): step 1/1. In terms of biological role, catalyzes the synthesis of GMP from XMP. In Helicobacter pylori (strain Shi470), this protein is GMP synthase [glutamine-hydrolyzing].